A 510-amino-acid polypeptide reads, in one-letter code: GMP synthase [glutamine-hydrolyzing] (510 aa).

In terms of domain architecture, Glutamine amidotransferase type-1 spans L5 to D195. The Nucleophile role is filled by C82. Catalysis depends on residues H169 and E171. Residues W196–R385 enclose the GMPS ATP-PPase domain. An ATP-binding site is contributed by S223 to S229.

In terms of assembly, homodimer.

The enzyme catalyses XMP + L-glutamine + ATP + H2O = GMP + L-glutamate + AMP + diphosphate + 2 H(+). It participates in purine metabolism; GMP biosynthesis; GMP from XMP (L-Gln route): step 1/1. Catalyzes the synthesis of GMP from XMP. This Clostridium tetani (strain Massachusetts / E88) protein is GMP synthase [glutamine-hydrolyzing].